The sequence spans 271 residues: Protein FANTASTIC FOUR 1 (271 aa).

An FAF domain is found at 114–168 (NSFPPPLNSVNGFNNSRMVKSYKEDGRLVVQAIRVCSPPRCFVSERREGRLRLCL). The interval 174–255 (NSQDAEEEFE…KRRCNENGCE (82 aa)) is disordered. Residues 177–224 (DAEEEFEEEDEDDQYDAEEEEEEEEEEEEEEEEEEEEEEEEEEEDEEG) are compositionally biased toward acidic residues. The segment covering 237 to 247 (GNKKVSNRPKR) has biased composition (basic residues).

It belongs to the fantastic four family. As to expression, expressed in the shoot apex, stamens, anthers and young siliques. Detected in provascular and vascular tissue.

Able to repress WUS when constitutively overexpressed, but have no effect on CLV3. This chain is Protein FANTASTIC FOUR 1 (FAF1), found in Arabidopsis thaliana (Mouse-ear cress).